We begin with the raw amino-acid sequence, 600 residues long: Methionine--tRNA ligase (600 aa).

Residues 11-21 (PYANGPRHIGH) carry the 'HIGH' region motif. Zn(2+) contacts are provided by Cys143, Cys146, Cys156, and Cys159. Positions 350 to 354 (QFSSS) match the 'KMSKS' region motif. Ser353 serves as a coordination point for ATP.

It belongs to the class-I aminoacyl-tRNA synthetase family. MetG type 1 subfamily. Monomer. Zn(2+) is required as a cofactor.

The protein resides in the cytoplasm. The enzyme catalyses tRNA(Met) + L-methionine + ATP = L-methionyl-tRNA(Met) + AMP + diphosphate. Its function is as follows. Is required not only for elongation of protein synthesis but also for the initiation of all mRNA translation through initiator tRNA(fMet) aminoacylation. The polypeptide is Methionine--tRNA ligase (Kineococcus radiotolerans (strain ATCC BAA-149 / DSM 14245 / SRS30216)).